Here is a 342-residue protein sequence, read N- to C-terminus: DNA primase small subunit PriS (342 aa).

Active-site residues include Asp-97, Asp-99, and Asp-276.

It belongs to the eukaryotic-type primase small subunit family. In terms of assembly, heterodimer of a small subunit (PriS) and a large subunit (PriL). Mg(2+) serves as cofactor. It depends on Mn(2+) as a cofactor.

In terms of biological role, catalytic subunit of DNA primase, an RNA polymerase that catalyzes the synthesis of short RNA molecules used as primers for DNA polymerase during DNA replication. The small subunit contains the primase catalytic core and has DNA synthesis activity on its own. Binding to the large subunit stabilizes and modulates the activity, increasing the rate of DNA synthesis while decreasing the length of the DNA fragments, and conferring RNA synthesis capability. The DNA polymerase activity may enable DNA primase to also catalyze primer extension after primer synthesis. May also play a role in DNA repair. This Thermococcus sibiricus (strain DSM 12597 / MM 739) protein is DNA primase small subunit PriS.